The following is a 320-amino-acid chain: MPEKVAVLLGGTSSERQISLQSGHAVVAGLREAGIDARPIDTKNFLVTELKEKGFTKAFIALHGRDGEDGHLQAVLEFLKIPYTGSGVMASALAMDKHRSKMIFQGAGLPVSPYVALNREQIWPNVTQNTSNDLLLNNRISNKLIKNINQLGLPLIVKPSREGSSFGMTKVEHLDQLDDALKKAWHYDEEILVEKWHFGTELTVAILGDTVLPSIRIQVSDIFYDYQAKYVSDKTQYFCPSGLKQEQEKQLATLSMNAYRALGCDGWGRVDVMLDDEGHFYLMEINTAPGMTDHSLFPMAARQAGFSFSELVCKILSLAH.

An ATP-grasp domain is found at 101-317 (KMIFQGAGLP…FSELVCKILS (217 aa)). ATP is bound at residue 148–203 (INQLGLPLIVKPSREGSSFGMTKVEHLDQLDDALKKAWHYDEEILVEKWHFGTELT). Asp-271, Glu-284, and Asn-286 together coordinate Mg(2+).

The protein belongs to the D-alanine--D-alanine ligase family. It depends on Mg(2+) as a cofactor. The cofactor is Mn(2+).

The protein localises to the cytoplasm. The enzyme catalyses 2 D-alanine + ATP = D-alanyl-D-alanine + ADP + phosphate + H(+). It participates in cell wall biogenesis; peptidoglycan biosynthesis. Its function is as follows. Cell wall formation. The chain is D-alanine--D-alanine ligase from Hamiltonella defensa subsp. Acyrthosiphon pisum (strain 5AT).